The sequence spans 746 residues: Double-stranded RNA-specific editase B2 (746 aa).

2 disordered regions span residues 1–36 (MASVLGSGRGSGGLSSQLKCKSKRRRRRRSKRKDKV) and 50–105 (SPGT…PLEE). The span at 20–34 (CKSKRRRRRRSKRKD) shows a compositional bias: basic residues. Residues 23-35 (KRRRRRRSKRKDK) are R-domain (ssRNA-binding). 2 consecutive DRBM domains span residues 126-192 (TPKN…SFVQ) and 284-348 (NPVV…ALFD). The A to I editase domain maps to 415-742 (VLSSGTKCIS…VRKPPEQDQF (328 aa)). H439 lines the Zn(2+) pocket. E441 serves as the catalytic Proton donor. Positions 497 and 562 each coordinate Zn(2+).

Brain specific.

It localises to the nucleus. Its function is as follows. Lacks editing activity. It prevents the binding of other ADAR enzymes to targets in vitro, and decreases the efficiency of these enzymes. Capable of binding to dsRNA but also to ssRNA. This is Double-stranded RNA-specific editase B2 (Adarb2) from Rattus norvegicus (Rat).